Reading from the N-terminus, the 542-residue chain is CTP synthase (542 aa).

Residues Met1–Ile265 are amidoligase domain. Residue Ser13 coordinates CTP. Position 13 (Ser13) interacts with UTP. ATP-binding positions include Ser14–Ile19 and Asp71. Residues Asp71 and Glu139 each coordinate Mg(2+). Residues Asp146–Glu148, Lys186–Gln191, and Lys222 contribute to the CTP site. UTP is bound by residues Lys186–Gln191 and Lys222. Residues Thr291–Leu541 enclose the Glutamine amidotransferase type-1 domain. Residue Gly353 participates in L-glutamine binding. Catalysis depends on Cys380, which acts as the Nucleophile; for glutamine hydrolysis. L-glutamine-binding positions include Phe381–Gln384, Glu404, and Arg469. Residues His514 and Glu516 contribute to the active site.

It belongs to the CTP synthase family. As to quaternary structure, homotetramer.

The enzyme catalyses UTP + L-glutamine + ATP + H2O = CTP + L-glutamate + ADP + phosphate + 2 H(+). The catalysed reaction is L-glutamine + H2O = L-glutamate + NH4(+). It carries out the reaction UTP + NH4(+) + ATP = CTP + ADP + phosphate + 2 H(+). It participates in pyrimidine metabolism; CTP biosynthesis via de novo pathway; CTP from UDP: step 2/2. Its activity is regulated as follows. Allosterically activated by GTP, when glutamine is the substrate; GTP has no effect on the reaction when ammonia is the substrate. The allosteric effector GTP functions by stabilizing the protein conformation that binds the tetrahedral intermediate(s) formed during glutamine hydrolysis. Inhibited by the product CTP, via allosteric rather than competitive inhibition. In terms of biological role, catalyzes the ATP-dependent amination of UTP to CTP with either L-glutamine or ammonia as the source of nitrogen. Regulates intracellular CTP levels through interactions with the four ribonucleotide triphosphates. The polypeptide is CTP synthase (Rhizobium leguminosarum bv. trifolii (strain WSM2304)).